Reading from the N-terminus, the 428-residue chain is Adenylosuccinate synthetase (428 aa).

GTP is bound by residues 12-18 and 40-42; these read GDEGKGK and GHT. The Proton acceptor role is filled by Asp-13. Asp-13 and Gly-40 together coordinate Mg(2+). Residues 13-16, 38-41, Thr-127, Arg-141, Gln-222, Thr-237, and Arg-301 contribute to the IMP site; these read DEGK and NAGH. Catalysis depends on His-41, which acts as the Proton donor. 297–303 lines the substrate pocket; sequence TVTKRPR. GTP is bound by residues Arg-303, 329 to 331, and 411 to 413; these read CLD and SVG.

Belongs to the adenylosuccinate synthetase family. As to quaternary structure, homodimer. It depends on Mg(2+) as a cofactor.

It localises to the cytoplasm. The catalysed reaction is IMP + L-aspartate + GTP = N(6)-(1,2-dicarboxyethyl)-AMP + GDP + phosphate + 2 H(+). It functions in the pathway purine metabolism; AMP biosynthesis via de novo pathway; AMP from IMP: step 1/2. Plays an important role in the de novo pathway of purine nucleotide biosynthesis. Catalyzes the first committed step in the biosynthesis of AMP from IMP. The sequence is that of Adenylosuccinate synthetase from Levilactobacillus brevis (strain ATCC 367 / BCRC 12310 / CIP 105137 / JCM 1170 / LMG 11437 / NCIMB 947 / NCTC 947) (Lactobacillus brevis).